We begin with the raw amino-acid sequence, 69 residues long: MTFYNYLMRHRAPVEKDDATRLANLVFQDPLFPKQSKDFDEISTYLETQAPFYFNLTLFDNIWESYLEA.

It belongs to the UPF0346 family.

The sequence is that of UPF0346 protein YuiB (yuiB) from Lactococcus lactis subsp. lactis (strain IL1403) (Streptococcus lactis).